We begin with the raw amino-acid sequence, 349 residues long: Sexual stage-specific protein G37 (349 aa).

Residues methionine 1–threonine 18 form the signal peptide. The Extracellular portion of the chain corresponds to phenylalanine 19–arginine 91. A helical transmembrane segment spans residues valine 92–glycine 112. Residues histidine 113 to lysine 117 lie on the Cytoplasmic side of the membrane. The chain crosses the membrane as a helical span at residues alanine 118–phenylalanine 138. Topologically, residues asparagine 139 to glycine 140 are extracellular. Residues isoleucine 141–leucine 161 form a helical membrane-spanning segment. Topologically, residues glycine 162–arginine 176 are cytoplasmic. Residues tyrosine 177–aspartate 197 traverse the membrane as a helical segment. The Extracellular segment spans residues glycine 198 to lysine 218. Residues tyrosine 219 to isoleucine 239 traverse the membrane as a helical segment. Over lysine 240–tyrosine 262 the chain is Cytoplasmic. A helical membrane pass occupies residues isoleucine 263–leucine 283. Residues serine 284 to serine 305 lie on the Extracellular side of the membrane. The helical transmembrane segment at serine 306–leucine 326 threads the bilayer. Residues arginine 327–isoleucine 349 are Cytoplasmic-facing.

The protein localises to the cell membrane. Functionally, involved in the development of male gametocytes. The protein is Sexual stage-specific protein G37 of Plasmodium berghei (strain Anka).